Consider the following 302-residue polypeptide: Protoheme IX farnesyltransferase 1 (302 aa).

9 consecutive transmembrane segments (helical) span residues 30–50 (VVALMLLTVLVGMCLALPGAV), 52–72 (LQPLIFGLLGIGMMAGAAAAF), 102–122 (ALTFSISLAVLGFVLLYTLVN), 124–144 (LTAWLTFASLLGYAVVYTAYL), 152–172 (IVVGGLAGAMPPLLGWTSVTG), 178–198 (ALLLVIIIFAWTPPHFWALAI), 224–244 (CILLYTILLAIACLLPVLVGM), 245–265 (CGPLYLVGSTLLSCGFIYKSW), and 282–302 (FSIYHLMLLFIVLLVDHYLWV).

The protein belongs to the UbiA prenyltransferase family. Protoheme IX farnesyltransferase subfamily.

It localises to the cell inner membrane. It carries out the reaction heme b + (2E,6E)-farnesyl diphosphate + H2O = Fe(II)-heme o + diphosphate. Its pathway is porphyrin-containing compound metabolism; heme O biosynthesis; heme O from protoheme: step 1/1. Functionally, converts heme B (protoheme IX) to heme O by substitution of the vinyl group on carbon 2 of heme B porphyrin ring with a hydroxyethyl farnesyl side group. The polypeptide is Protoheme IX farnesyltransferase 1 (Shewanella woodyi (strain ATCC 51908 / MS32)).